A 548-amino-acid chain; its full sequence is DNA ligase (548 aa).

Glutamate 196 lines the ATP pocket. Lysine 198 functions as the N6-AMP-lysine intermediate in the catalytic mechanism. ATP-binding residues include arginine 203, arginine 218, glutamate 250, and phenylalanine 284. An a divalent metal cation-binding site is contributed by glutamate 250. Residue glutamate 345 participates in a divalent metal cation binding. Residues arginine 361 and lysine 365 each contribute to the ATP site. The interval 515–548 (EQLIRNSQENTKKTFARLATTYDGPSPNKKLKLN) is disordered.

Belongs to the ATP-dependent DNA ligase family. It depends on a divalent metal cation as a cofactor.

The enzyme catalyses ATP + (deoxyribonucleotide)n-3'-hydroxyl + 5'-phospho-(deoxyribonucleotide)m = (deoxyribonucleotide)n+m + AMP + diphosphate.. Able to ligate a double-stranded synthetic DNA substrate containing a single nick and inefficiently ligated a 1 nucleotide gap but did not ligate a 2 nucleotide gap. It is able to ligate short, complementary overhangs but not blunt-ended double-stranded DNA. May be implicated in DNA repair and recombination. This Lepidoptera (butterflies and moths) protein is DNA ligase (LIG).